The primary structure comprises 394 residues: Metallophosphoesterase 1 (394 aa).

The helical transmembrane segment at 27 to 47 (TVVVISVLLFCEYFIYYLVLF) threads the bilayer. Residues D74, D116, N154, H247, H301, and H303 each coordinate a divalent metal cation. The helical transmembrane segment at 354–374 (TVLTTYCAAAAFLLVLILAHF) threads the bilayer.

It belongs to the metallophosphoesterase superfamily. MPPE1 family. As to quaternary structure, interacts with GPI-anchor proteins (via the GPI portion). Interacts with TMED10. Requires Mn(2+) as cofactor.

It localises to the endoplasmic reticulum-Golgi intermediate compartment membrane. Its function is as follows. Metallophosphoesterase that catalyzes the removal of a side-chain ethanolamine-phosphate (EtNP) from the second mannose of the GPI-anchor protein intermediate. Participates in the glycan remodeling steps of GPI-anchor maturation to allow an efficient transport of GPI-anchor proteins from the endoplasmic reticulum to the Golgi. This is Metallophosphoesterase 1 from Rattus norvegicus (Rat).